The following is a 116-amino-acid chain: Phosphoribosyl-AMP cyclohydrolase (116 aa).

Position 85 (Asp85) interacts with Mg(2+). Cys86 is a Zn(2+) binding site. Mg(2+) contacts are provided by Asp87 and Asp89. Residues Cys102 and Cys109 each coordinate Zn(2+).

The protein belongs to the PRA-CH family. As to quaternary structure, homodimer. Mg(2+) is required as a cofactor. The cofactor is Zn(2+).

The protein localises to the cytoplasm. It catalyses the reaction 1-(5-phospho-beta-D-ribosyl)-5'-AMP + H2O = 1-(5-phospho-beta-D-ribosyl)-5-[(5-phospho-beta-D-ribosylamino)methylideneamino]imidazole-4-carboxamide. It functions in the pathway amino-acid biosynthesis; L-histidine biosynthesis; L-histidine from 5-phospho-alpha-D-ribose 1-diphosphate: step 3/9. Catalyzes the hydrolysis of the adenine ring of phosphoribosyl-AMP. The protein is Phosphoribosyl-AMP cyclohydrolase of Corynebacterium diphtheriae (strain ATCC 700971 / NCTC 13129 / Biotype gravis).